Consider the following 546-residue polypeptide: T-complex protein 1 subunit zeta (546 aa).

Serine 2 is subject to N-acetylserine. Serine 249 is subject to Phosphoserine.

The protein belongs to the TCP-1 chaperonin family. In terms of assembly, heterooligomeric complex of about 850 to 900 kDa that forms two stacked rings, 12 to 16 nm in diameter.

The protein localises to the cytoplasm. Its function is as follows. Molecular chaperone; assists the folding of proteins upon ATP hydrolysis. Known to play a role, in vitro, in the folding of actin and tubulin. In yeast may play a role in mitotic spindle formation. This chain is T-complex protein 1 subunit zeta (CCT6), found in Saccharomyces cerevisiae (strain ATCC 204508 / S288c) (Baker's yeast).